Consider the following 189-residue polypeptide: Potassium-transporting ATPase KdpC subunit (189 aa).

Residues 11–31 (LFVLLTVITGVLYPVFVTGLA) form a helical membrane-spanning segment.

The protein belongs to the KdpC family. In terms of assembly, the system is composed of three essential subunits: KdpA, KdpB and KdpC.

The protein localises to the cell inner membrane. Functionally, part of the high-affinity ATP-driven potassium transport (or Kdp) system, which catalyzes the hydrolysis of ATP coupled with the electrogenic transport of potassium into the cytoplasm. This subunit acts as a catalytic chaperone that increases the ATP-binding affinity of the ATP-hydrolyzing subunit KdpB by the formation of a transient KdpB/KdpC/ATP ternary complex. The protein is Potassium-transporting ATPase KdpC subunit of Polynucleobacter asymbioticus (strain DSM 18221 / CIP 109841 / QLW-P1DMWA-1) (Polynucleobacter necessarius subsp. asymbioticus).